A 523-amino-acid chain; its full sequence is Cytoplasmic dynein 1 light intermediate chain 1 (523 aa).

A disordered region spans residues 1–25 (MAAVGRVGSFGSSPPGLSSTYTGGP). The segment covering 9–19 (SFGSSPPGLSS) has biased composition (low complexity). Residue 74–81 (GEDGAGKT) coordinates ATP. Ser207 carries the phosphoserine modification. Position 213 is a phosphothreonine (Thr213). Disordered stretches follow at residues 387-434 (PPTA…DPNM) and 456-523 (TGSP…GEAS). Phosphoserine is present on residues Ser398 and Ser405. The residue at position 408 (Thr408) is a Phosphothreonine. Phosphoserine is present on residues Ser412, Ser419, Ser421, and Ser427. Residues 412-421 (SVSSNVASVS) show a composition bias toward low complexity. Gly residues predominate over residues 458 to 478 (SPGGPGVSGGSPAGGAGGGSS). Ser487 is modified (phosphoserine). Over residues 493–503 (LDVHAELDRIT) the composition is skewed to basic and acidic residues. Over residues 506 to 523 (PVTVSPTTPTSPTEGEAS) the composition is skewed to low complexity. A Phosphoserine modification is found at Ser510. Residues Thr512, Thr513, and Thr515 each carry the phosphothreonine modification. The residue at position 516 (Ser516) is a Phosphoserine.

This sequence belongs to the dynein light intermediate chain family. Homodimer. The cytoplasmic dynein 1 complex consists of two catalytic heavy chains (HCs) and a number of non-catalytic subunits presented by intermediate chains (ICs), light intermediate chains (LICs) and light chains (LCs); the composition seems to vary in respect to the IC, LIC and LC composition. The heavy chain homodimer serves as a scaffold for the probable homodimeric assembly of the respective non-catalytic subunits. The ICs and LICs bind directly to the HC dimer and the LCs assemble on the IC dimer. Self-associates. Interacts with DYNC1H1; DYNC1LI1 and DYNC1LI2 bind mutually exclusive to DYNC1H1. Interacts with PCNT. Forms a complex with RAB11FIP3 and RAB11A1; the interaction between DYNC1LI1 and RAB11FIP3 is direct and induces DYNC1LI1 localization onto endosomal membrane; the complex regulates endocytic trafficking. Interacts with RUFY3. In terms of assembly, (Microbial infection) Interacts with human adenovirus 5 hexon protein; this interaction probably allows virus intracellular transport. Post-translationally, phosphorylated during mitosis but not in interphase.

The protein resides in the cytoplasm. It is found in the chromosome. Its subcellular location is the centromere. It localises to the kinetochore. The protein localises to the cytoskeleton. The protein resides in the spindle pole. It is found in the recycling endosome membrane. Its function is as follows. Acts as one of several non-catalytic accessory components of the cytoplasmic dynein 1 complex that are thought to be involved in linking dynein to cargos and to adapter proteins that regulate dynein function. Cytoplasmic dynein 1 acts as a motor for the intracellular retrograde motility of vesicles and organelles along microtubules. May play a role in binding dynein to membranous organelles or chromosomes. Probably involved in the microtubule-dependent transport of pericentrin. Is required for progress through the spindle assembly checkpoint. The phosphorylated form appears to be involved in the selective removal of MAD1L1 and MAD1L2 but not BUB1B from kinetochores. Forms a functional Rab11/RAB11FIP3/dynein complex onto endosomal membrane that regulates the movement of peripheral sorting endosomes (SE) along microtubule tracks toward the microtubule organizing center/centrosome, generating the endosomal recycling compartment (ERC). The protein is Cytoplasmic dynein 1 light intermediate chain 1 (DYNC1LI1) of Homo sapiens (Human).